The sequence spans 839 residues: ATP-binding cassette sub-family F member 1 (839 aa).

The segment at 1–258 (MPKGPKQQPP…KKEKKKLKKQ (258 aa)) is disordered. Residue Ser22 is modified to Phosphoserine. Residues 29 to 39 (KKGKKDKKTKK) show a composition bias toward basic residues. Residues 47-64 (VEDKQAGEEEKLQKEKEQ) are compositionally biased toward basic and acidic residues. The segment covering 71-83 (QKKKRDTRKGRRK) has biased composition (basic residues). Residues Ser105, Ser109, and Ser140 each carry the phosphoserine modification. Acidic residues predominate over residues 136–149 (IQDESEEEKEEEEE). Basic and acidic residues predominate over residues 150 to 162 (KPVLKPAKPEKNR). At Thr195 the chain carries Phosphothreonine. Ser197 bears the Phosphoserine mark. A compositionally biased stretch (basic and acidic residues) spans 206–223 (TKEKEPPRPGKDKDKKGA). The residue at position 227 (Ser227) is a Phosphoserine. Over residues 247-256 (LSKKEKKKLK) the composition is skewed to basic residues. Residues 298–542 (IKLEKFSISA…MYQQKQKELL (245 aa)) form the ABC transporter 1 domain. 330 to 337 (GPNGKGKT) lines the ATP pocket. Over residues 553–574 (KELKAGGKSTKQAEKQTKEVLT) the composition is skewed to basic and acidic residues. The interval 553-600 (KELKAGGKSTKQAEKQTKEVLTRKQQKCRRKNQDEESQDPPELLKRPR) is disordered. The residue at position 589 (Ser589) is a Phosphoserine. The region spanning 619-834 (LGLHGVTFGY…VLEALGEVMV (216 aa)) is the ABC transporter 2 domain. 652-659 (GPNGVGKS) is a binding site for ATP.

In terms of assembly, interacts (via N-terminus) with EIF2S1; the interaction is independent of its phosphorylated status. Associates (via both ABC transporter domains) with the ribosomes. Phosphorylated at phosphoserine and phosphothreonine. Phosphorylation on Ser-109 and Ser-140 by CK2; inhibits association of EIF2 with ribosomes.

It localises to the cytoplasm. The protein localises to the nucleus. It is found in the nucleoplasm. Its subcellular location is the nucleus envelope. In terms of biological role, required for efficient Cap- and IRES-mediated mRNA translation initiation. Not involved in the ribosome biogenesis. The protein is ATP-binding cassette sub-family F member 1 (Abcf1) of Rattus norvegicus (Rat).